The chain runs to 753 residues: Taperin (753 aa).

A disordered region spans residues phenylalanine 141–glutamate 348. Over residues proline 182–proline 197 the composition is skewed to pro residues. 2 stretches are compositionally biased toward polar residues: residues leucine 230 to threonine 239 and valine 250 to serine 263. Serine 274 is modified (phosphoserine). Over residues threonine 300–serine 322 the composition is skewed to low complexity. Polar residues predominate over residues glutamine 323 to aspartate 335. Basic and acidic residues predominate over residues phenylalanine 337–methionine 347. A phosphoserine mark is found at serine 402, serine 458, and serine 502. Residues glycine 438 to valine 488 form a disordered region. Disordered stretches follow at residues phenylalanine 544–histidine 583 and phenylalanine 637–lysine 676. The segment covering histidine 559 to alanine 571 has biased composition (polar residues). Residues glutamate 648–proline 672 are compositionally biased toward acidic residues.

It belongs to the taperin family. In terms of assembly, interacts with GRXCR2; the interaction restricts TPRN to the stereocilum basal region. Interacts with actin ACTB; the interaction may stabilize stereocilia. Interacts with CLIC5. Interacts with PTPRQ. TPRN, CLIC5 and PTPQR form concentric rings at the base of stereocilia and may form a complex. Interacts with phosphatase PPP1CA; the interaction results in inhibition of PPC1A phosphatase activity. Interacts with DNA damage response proteins XRCC6/KU70, XRCC5/KU80, PARP1, TOP1 and TOP2A; these interactions recruit TPRN to sites of DNA damage where it may play a role in DNA repair.

It is found in the cell projection. Its subcellular location is the stereocilium. The protein localises to the microvillus. The protein resides in the nucleus. It localises to the nucleoplasm. It is found in the cytoplasm. Its function is as follows. Essential for hearing. Required for maintenance of stereocilia on both inner and outer hair cells. Necessary for the integrity of the stereociliary rootlet. May act as an actin cytoskeleton regulator involved in the regulation of actin dynamics at the pointed end in hair cells. Forms rings at the base of stereocilia and binds actin filaments in the stereocilia which may stabilize the stereocilia. Acts as a strong inhibitor of PPP1CA phosphatase activity. Recruited to sites of DNA damage and may play a role in DNA damage repair. In Rattus norvegicus (Rat), this protein is Taperin (Tprn).